Consider the following 1658-residue polypeptide: Protein TIC 214 (1658 aa).

6 consecutive transmembrane segments (helical) span residues Phe-28–Ile-48, Leu-52–Ile-72, Ile-82–Phe-102, Ile-130–Phe-150, Ile-165–Leu-185, and Val-199–Leu-219.

It belongs to the TIC214 family. In terms of assembly, part of the Tic complex.

It is found in the plastid. The protein localises to the chloroplast inner membrane. Its function is as follows. Involved in protein precursor import into chloroplasts. May be part of an intermediate translocation complex acting as a protein-conducting channel at the inner envelope. The chain is Protein TIC 214 from Huperzia lucidula (Shining clubmoss).